The chain runs to 485 residues: Glutamyl-tRNA(Gln) amidotransferase subunit A (485 aa).

Active-site charge relay system residues include Lys-74 and Ser-149. Catalysis depends on Ser-173, which acts as the Acyl-ester intermediate.

This sequence belongs to the amidase family. GatA subfamily. Heterotrimer of A, B and C subunits.

It catalyses the reaction L-glutamyl-tRNA(Gln) + L-glutamine + ATP + H2O = L-glutaminyl-tRNA(Gln) + L-glutamate + ADP + phosphate + H(+). Allows the formation of correctly charged Gln-tRNA(Gln) through the transamidation of misacylated Glu-tRNA(Gln) in organisms which lack glutaminyl-tRNA synthetase. The reaction takes place in the presence of glutamine and ATP through an activated gamma-phospho-Glu-tRNA(Gln). This is Glutamyl-tRNA(Gln) amidotransferase subunit A from Synechococcus sp. (strain RCC307).